Here is a 121-residue protein sequence, read N- to C-terminus: Protein ripply2.1 (121 aa).

The interval methionine 1 to histidine 69 is disordered. The short motif at tryptophan 29–tryptophan 32 is the WRPW motif element. Over residues histidine 39–histidine 57 the composition is skewed to polar residues. Positions histidine 69–tyrosine 104 are ripply homology domain.

The protein belongs to the ripply family. Expressed in the presomitic mesoderm (PSM) in the anterior halves of somitomeres S-0, S-I and S-II and in the newly formed somites.

The protein resides in the nucleus. Required during somitogenesis to regulate somite differentiation and the positioning of the presomitic mesoderm-front. Represses the expression of genes involved in somite segmentation by acting with the corepressor tle4 to down-regulate the transcriptional activity of tbx6. Also regulates retinoic acid signaling during somitogenesis and is necessary for the expression of aldh1a2/raldh2. This Xenopus laevis (African clawed frog) protein is Protein ripply2.1 (ripply2.1).